The chain runs to 354 residues: Uroporphyrinogen decarboxylase (354 aa).

Substrate is bound by residues 27-31 (RQAGR), F46, D77, Y154, S209, and H327.

Belongs to the uroporphyrinogen decarboxylase family. Homodimer.

It localises to the cytoplasm. It carries out the reaction uroporphyrinogen III + 4 H(+) = coproporphyrinogen III + 4 CO2. It participates in porphyrin-containing compound metabolism; protoporphyrin-IX biosynthesis; coproporphyrinogen-III from 5-aminolevulinate: step 4/4. Functionally, catalyzes the decarboxylation of four acetate groups of uroporphyrinogen-III to yield coproporphyrinogen-III. In Shewanella oneidensis (strain ATCC 700550 / JCM 31522 / CIP 106686 / LMG 19005 / NCIMB 14063 / MR-1), this protein is Uroporphyrinogen decarboxylase.